Reading from the N-terminus, the 239-residue chain is Type III effector protein HopBA1 (239 aa).

Over residues 1-20 (MLNRISSSSPTSYVSSGSSS) the composition is skewed to low complexity. Residues 1–31 (MLNRISSSSPTSYVSSGSSSAGINPSINVRP) form a disordered region.

It is found in the secreted. It localises to the host cell. Its function is as follows. Virulence factor recognized by the A.thaliana disease resistance protein RBA1, which triggers plant cell death. HopBA1 enhances RBA1 self-association, which is necessary for ectopic autoactivation of host cell death. This chain is Type III effector protein HopBA1, found in Pseudomonas syringae pv. aptata.